A 945-amino-acid chain; its full sequence is Splicing factor, suppressor of white-apricot homolog (945 aa).

2 disordered regions span residues 1–28 (MYGA…GTGT) and 157–190 (YYDP…PFIA). Composition is skewed to basic and acidic residues over residues 9–21 (AKAE…KEEA) and 169–178 (PSKQREKSEA). The stretch at 211-253 (IIERTANFVCKQGAQFEIMLKAKQARNSQFDFLRFDHYLNPYY) is one SURP motif 1 repeat. The segment at 269 to 298 (AESKSEEKKKSGPTSDNEEEDDEEDGSYLH) is disordered. At Ser-283 the chain carries Phosphoserine. Over residues 284–294 (DNEEEDDEEDG) the composition is skewed to acidic residues. Residue Lys-315 is modified to N6-acetyllysine. Disordered regions lie at residues 332-355 (KAQA…PSQV) and 403-438 (SSSP…STTT). Over residues 335–352 (ADSSAPAPPTADGTPAQP) the composition is skewed to low complexity. Pro residues predominate over residues 412–425 (VPPPPGTTPPPPPT). Over residues 426 to 438 (TAESSSGVTSTTT) the composition is skewed to low complexity. An SURP motif 2 repeat occupies 458-498 (VIDKLAEYVARNGLKFETSVRAKNDQRFEFLQPWHQYNAYY). 3 disordered regions span residues 512-566 (GSTQ…TVDG), 589-680 (PLEK…QAER), and 714-921 (GVMP…VQSK). A compositionally biased stretch (low complexity) spans 514-527 (TQAASTAEEAPTET). A compositionally biased stretch (acidic residues) spans 528 to 540 (AVEESSEAGEDGA). Over residues 589–598 (PLEKNRVKLD) the composition is skewed to basic and acidic residues. A phosphoserine mark is found at Ser-601 and Ser-621. Residues 615–630 (SSVANPSPAAAPPSAV) show a composition bias toward low complexity. The stretch at 632–686 (EEKKPQLTQEELEAKQAKQKLEDRLAAAAREKLAQASKESKEKQLQAERKRKAAL) forms a coiled coil. Thr-639 bears the Phosphothreonine mark. 2 stretches are compositionally biased toward basic and acidic residues: residues 643–679 (LEAK…LQAE) and 733–752 (KPPE…EERE). Basic residues-rich tracts occupy residues 753–787 (KKKK…KAKH) and 795–810 (TVRR…RRRA). Positions 811–821 (HSPERRREDRS) are enriched in basic and acidic residues. 2 positions are modified to phosphoserine: Ser-829 and Ser-831. A compositionally biased stretch (basic residues) spans 835–861 (SRKRTRSRSPHEKKKKRRSRSRTKAKA). A compositionally biased stretch (low complexity) spans 871-894 (QAAQRPSAHSAHSASISPVESRGS). The segment covering 895–908 (SQERSRGVSQEKDG) has biased composition (basic and acidic residues). Phosphoserine occurs at positions 899 and 903. Positions 909-920 (QISSAIVSSVQS) are enriched in low complexity.

It is found in the nucleus. Its function is as follows. Plays a role as an alternative splicing regulator. Regulate its own expression at the level of RNA processing. Also regulates the splicing of fibronectin and CD45 genes. May act, at least in part, by interaction with other R/S-containing splicing factors. Represses the splicing of MAPT/Tau exon 10. The sequence is that of Splicing factor, suppressor of white-apricot homolog (Sfswap) from Rattus norvegicus (Rat).